Here is a 165-residue protein sequence, read N- to C-terminus: MSGKLTHIDQTGAANMVDVGSKDETERQAVAEGAVRMKPETLALILEGNAAKGDVIGTARLAGIMAAKRTSDLIPLCHPLMLTKVAVEIEPDENLPGLRVRALARLKGRTGVEMEALTAASVTCLTIYDMAKAVDRHMEIGSIRVIEKSGGKSGDWAVSDPASMR.

Residues 76–78 (LCH) and 114–115 (ME) each bind substrate. Asp-129 is an active-site residue.

This sequence belongs to the MoaC family. As to quaternary structure, homohexamer; trimer of dimers.

The catalysed reaction is (8S)-3',8-cyclo-7,8-dihydroguanosine 5'-triphosphate = cyclic pyranopterin phosphate + diphosphate. Its pathway is cofactor biosynthesis; molybdopterin biosynthesis. Functionally, catalyzes the conversion of (8S)-3',8-cyclo-7,8-dihydroguanosine 5'-triphosphate to cyclic pyranopterin monophosphate (cPMP). The protein is Cyclic pyranopterin monophosphate synthase of Brucella melitensis biotype 2 (strain ATCC 23457).